We begin with the raw amino-acid sequence, 376 residues long: Dihydroorotate dehydrogenase (quinone) (376 aa).

Residues 78–82 (AGFDK) and Thr-102 contribute to the FMN site. Lys-82 provides a ligand contact to substrate. 127-131 (NRMGF) is a substrate binding site. FMN-binding residues include Asn-157 and Asn-190. Asn-190 lines the substrate pocket. The Nucleophile role is filled by Ser-193. Asn-195 is a binding site for substrate. FMN-binding residues include Lys-228 and Thr-256. A substrate-binding site is contributed by 257 to 258 (NT). Residues Gly-286, Gly-315, and 336–337 (YT) contribute to the FMN site.

Belongs to the dihydroorotate dehydrogenase family. Type 2 subfamily. Monomer. FMN serves as cofactor.

The protein localises to the cell membrane. The catalysed reaction is (S)-dihydroorotate + a quinone = orotate + a quinol. Its pathway is pyrimidine metabolism; UMP biosynthesis via de novo pathway; orotate from (S)-dihydroorotate (quinone route): step 1/1. Catalyzes the conversion of dihydroorotate to orotate with quinone as electron acceptor. The protein is Dihydroorotate dehydrogenase (quinone) of Nostoc sp. (strain PCC 7120 / SAG 25.82 / UTEX 2576).